The sequence spans 304 residues: Urease accessory protein UreD 2 (304 aa).

The protein belongs to the UreD family. UreD, UreF and UreG form a complex that acts as a GTP-hydrolysis-dependent molecular chaperone, activating the urease apoprotein by helping to assemble the nickel containing metallocenter of UreC. The UreE protein probably delivers the nickel.

Its subcellular location is the cytoplasm. Required for maturation of urease via the functional incorporation of the urease nickel metallocenter. Functionally, disrupting the ure2 operon has no effect on urease activity or pathogen survival in BALB/c mice when administered orally. This Brucella abortus (strain 2308) protein is Urease accessory protein UreD 2.